The following is a 258-amino-acid chain: Maintenance of carboxysome distribution protein A (258 aa).

ATP-binding residues include Gly-11, Gly-12, Gln-13, Gly-14, Lys-15, Thr-16, Thr-17, Gln-40, Glu-147, Lys-151, Phe-182, Arg-183, Leu-216, Glu-217, Ser-218, and Tyr-221. Thr-16 contributes to the Mg(2+) binding site.

The protein belongs to the ParA family. McdA subfamily. In terms of assembly, homodimerizes in the presence of ATP, making extra nucleotide contacts than with ADP or AMP-PNP. Each subunit binds 1 ATP molecule; Glu-147, Lys-151 and Arg-183 cross the dimer interface to contact ATP in the other subunit, while Phe-182, Arg-183 and Tyr-221 stack with the adenine base in their own subunit. Forms a complex with McdB.

It localises to the cytoplasm. The protein localises to the nucleoid. It catalyses the reaction ATP + H2O = ADP + phosphate + H(+). Its function is as follows. McdA and McdB together mediate carboxysome (Cb) spacing, size, ultrastructure and probably inheritance in the cell, together they prevent Cb aggregation. McdA is an ATPase that forms dynamic gradients on the nucleoid in response to adapter protein McdB, which associates with carboxysomes. The interplay between McdA gradients on the nucleoid and McdB-bound carboxysomes result in the equal spacing of Cbs along the cell length. Binds DNA saturably and strongly in the presence of Mg(2+)ATP; without ATP, DNA-binding is very poor (tested with a mutant that should not be able to hydrolyze ATP, Asp-38-Ala). Decreasing the NaCl concentration increases DNA binding. Incorrect positioning (aggregation) of carboxysomes results in reduced CO(2) fixation by encapsulated ribulose-1,5-bisphosphate carboxylase (RuBisCO, cbbL/cbbS), which leads to slower growth. The protein is Maintenance of carboxysome distribution protein A of Gloeothece citriformis (strain PCC 7424) (Cyanothece sp. (strain PCC 7424)).